We begin with the raw amino-acid sequence, 140 residues long: Protein ripply1 (140 aa).

Positions 28-31 (WRPW) match the WRPW motif; required for gro2-binding motif. The interval 71–106 (HPVRLYWPRSKSFDYLFSDGEALLRNFPVQATINFY) is ripply homology domain. Positions 107–126 (DESDSEDEEESCDEDDESDV) are disordered.

Belongs to the ripply family. Interacts with gro2 via the WRPW motif. As to expression, expressed in the embryonic anterior presomitic mesoderm and in newly formed somites.

It is found in the nucleus. Its function is as follows. Plays a role in somitogenesis. Essential for transcriptional repression of the segmental patterning genes, thus terminating the segmentation program in the presomitic mesoderm, and also required for the maintenance of rostrocaudal polarity in somites. The protein is Protein ripply1 of Danio rerio (Zebrafish).